The following is a 125-amino-acid chain: Probable prefoldin subunit 6 (125 aa).

The protein belongs to the prefoldin subunit beta family. As to quaternary structure, heterohexamer of two PFD-alpha type and four PFD-beta type subunits.

Functionally, binds specifically to cytosolic chaperonin (c-CPN) and transfers target proteins to it. Binds to nascent polypeptide chain and promotes folding in an environment in which there are many competing pathways for nonnative proteins. The chain is Probable prefoldin subunit 6 from Drosophila melanogaster (Fruit fly).